An 81-amino-acid chain; its full sequence is Defensin-like protein 45 (81 aa).

The signal sequence occupies residues 1–27; it reads MAITKTSATFVLLIILAASLSNFNVLA. Disulfide bonds link Cys40–Cys79, Cys44–Cys67, Cys53–Cys77, and Cys57–Cys78.

Belongs to the DEFL family.

It is found in the secreted. The polypeptide is Defensin-like protein 45 (Arabidopsis thaliana (Mouse-ear cress)).